The sequence spans 344 residues: Fructose-bisphosphate aldolase (344 aa).

A D-glyceraldehyde 3-phosphate-binding site is contributed by S53. D95 serves as the catalytic Proton donor. The Zn(2+) site is built by H96, D131, E161, and H212. Residue G213 participates in dihydroxyacetone phosphate binding. Residue H252 participates in Zn(2+) binding. Dihydroxyacetone phosphate-binding positions include G253–S255 and N274–T277.

The protein belongs to the class II fructose-bisphosphate aldolase family. The cofactor is Zn(2+).

It catalyses the reaction beta-D-fructose 1,6-bisphosphate = D-glyceraldehyde 3-phosphate + dihydroxyacetone phosphate. The protein operates within carbohydrate degradation; glycolysis; D-glyceraldehyde 3-phosphate and glycerone phosphate from D-glucose: step 4/4. Its function is as follows. Catalyzes the aldol condensation of dihydroxyacetone phosphate (DHAP or glycerone-phosphate) with glyceraldehyde 3-phosphate (G3P) to form fructose 1,6-bisphosphate (FBP) in gluconeogenesis and the reverse reaction in glycolysis. The protein is Fructose-bisphosphate aldolase (fba) of Corynebacterium glutamicum (strain ATCC 13032 / DSM 20300 / JCM 1318 / BCRC 11384 / CCUG 27702 / LMG 3730 / NBRC 12168 / NCIMB 10025 / NRRL B-2784 / 534).